A 120-amino-acid polypeptide reads, in one-letter code: Peptidyl-tRNA hydrolase (120 aa).

It belongs to the PTH2 family. Homodimer.

The protein localises to the cytoplasm. The catalysed reaction is an N-acyl-L-alpha-aminoacyl-tRNA + H2O = an N-acyl-L-amino acid + a tRNA + H(+). Functionally, the natural substrate for this enzyme may be peptidyl-tRNAs which drop off the ribosome during protein synthesis. The polypeptide is Peptidyl-tRNA hydrolase (Saccharolobus solfataricus (strain ATCC 35092 / DSM 1617 / JCM 11322 / P2) (Sulfolobus solfataricus)).